Here is a 527-residue protein sequence, read N- to C-terminus: Metal transporter Nramp6 (527 aa).

12 consecutive transmembrane segments (helical) span residues 38-58, 71-91, 115-135, 143-163, 173-193, 221-241, 264-284, 321-341, 364-384, 385-405, 427-447, and 458-478; these read FFSYLGPGFLVSIAYIDPGNF, ELLWIILVASCAALVIQSLAA, FMLWVVAEIAVVACDIPEVIG, LFNIPVWIGVLLTGLSTLILL, LEFLIAFLVFTIALCFFVELH, ISLLGAMVMPHNLFLHSALVL, GLALMVAFLINVSVISVSGAV, LFAIALLASGQSSTITGTYAG, CLAIIPSLIVALIGGSAGAGK, LIIIASMILSFELPFALVPLL, TWIIGGLIMGINIYYLVSSFI, and VAIVFLGVLGFSGIATYLAAI.

This sequence belongs to the NRAMP (TC 2.A.55) family. Expressed in the vascular bundles of shoots, cotyledons, young leaves, sepals and petals, at the top of the flower stem and in the style. Expressed in the peduncle of developing siliques as well as in the septum and the funiculi.

Its subcellular location is the endomembrane system. Functionally, probable intracellular cadmium (Cd) transporter that participates in the distribution or availability of Cd within the cell. The sequence is that of Metal transporter Nramp6 (NRAMP6) from Arabidopsis thaliana (Mouse-ear cress).